Here is a 528-residue protein sequence, read N- to C-terminus: RNA polymerase sigma factor SigA (528 aa).

Over residues 1–10 (MAATKASTAT) the composition is skewed to polar residues. The tract at residues 1-211 (MAATKASTAT…FVWDEDESEA (211 aa)) is disordered. 3 stretches are compositionally biased toward low complexity: residues 19–31 (TKSP…GAKT), 38–56 (AKSA…PAAR), and 80–92 (AAKS…PSAR). Over residues 100–109 (APKDAQHEAA) the composition is skewed to basic and acidic residues. Over residues 110–173 (TDPEDALDSV…DDEDHEDLEA (64 aa)) the composition is skewed to acidic residues. Residues 295 to 365 (LLEANLRLVV…TRAMADQART (71 aa)) are sigma-70 factor domain-2. Residues 319–322 (DLIQ) carry the Interaction with polymerase core subunit RpoC motif. The sigma-70 factor domain-3 stretch occupies residues 374–450 (EVINKLGRIQ…DSEAVVAVDA (77 aa)). The segment at 463–516 (VLDTLSEREAGVVRLRFGLTDGQPRTLDEIGQVYGVTRERIRQIESKTMSKLRH) is sigma-70 factor domain-4. The segment at residues 489 to 508 (LDEIGQVYGVTRERIRQIES) is a DNA-binding region (H-T-H motif).

Belongs to the sigma-70 factor family. RpoD/SigA subfamily. In terms of assembly, interacts transiently with the RNA polymerase catalytic core.

Its subcellular location is the cytoplasm. Sigma factors are initiation factors that promote the attachment of RNA polymerase to specific initiation sites and are then released. This sigma factor is the primary sigma factor during exponential growth. This chain is RNA polymerase sigma factor SigA, found in Mycobacterium bovis (strain ATCC BAA-935 / AF2122/97).